The sequence spans 1169 residues: MSHIEQEERKRFFNDDLDTSETSLNFKSENKESFLFANSHNDDDDDVVVSVSDTTEGEGDRSIVPVRREIEEEGQNQFITELLRIIPEMPKDLVMELNEKFGSQEEGLSLALSHYFDHNSGTSISKIPSSPNQLNTLSDTSNSTLSPSSFHPKRRRIYGFRNQTRLEDKVTWKRFIGALQVTGMATRPTVRPLKYGSQMKLKRSSEEISATKVYDSRGRKKASMASLVRIFDIQYDREIGRVSEDIAQILYPLLSSHEISFEVTLIFCDNKRLSIGDSFILQLDCFLTSLIFEERNDGESLMKRRRTEGGNKREKDNGNFGRTLTETDEELESRSKRLALLKLFDKLRLKPILDEQKALEKHKIELNSDPEIIDLDNDEICSNQVTEVHNNLRDTQHEEETMNLNQLKTFYKAAQSSESLKSLPETEPSRDVFKLELRNYQKQGLTWMLRREQEFAKAASDGEASETGANMINPLWKQFKWPNDMSWAAQNLQQDHVNVEDGIFFYANLHSGEFSLAKPILKTMIKGGILSDEMGLGKTVAAYSLVLSCPHDSDVVDKKLFDIENTAVSDNLPSTWQDNKKPYASKTTLIVVPMSLLTQWSNEFTKANNSPDMYHEVYYGGNVSSLKTLLTKTKTPPTVVLTTYGIVQNEWTKHSKGRMTDEDVNISSGLFSVNFYRIIIDEGHNIRNRTTVTSKAVMALQGKCKWVLTGTPIINRLDDLYSLVKFLELDPWRQINYWKTFVSTPFESKNYKQAFDVVNAILEPVLLRRTKQMKDKDGKPLVELPPKEVVIKRLPFSKSQDLLYKFLLDKAEVSVKSGIARGDLLKKYSTILVHILRLRQVCCHPGLIGSQDENDEDLSKNNKLVTEQTVELDSLMRVVSERFDNSFSKEELDAMIQRLKVKYPDNKSFQSLECSICTTEPMDLDKALFTECGHSFCEKCLFEYIEFQNSKNLGLKCPNCRNQIDACRLLALVQTNSNSKNLEFKPYSPASKSSKITALLKELQLLQDSSAGEQVVIFSQFSTYLDILEKELTHTFSKDVAKIYKFDGRLSLKERTSVLADFAVKDYSRQKILLLSLKAGGVGLNLTCASHAYMMDPWWSPSMEDQAIDRLHRIGQTNSVKVMRFIIQDSIEEKMLRIQEKKRTIGEAMDTDEDERRKRRIEEIQMLFE.

An N-acetylserine modification is found at Ser-2. A phosphoserine mark is found at Ser-20, Ser-23, Ser-129, and Ser-130. The segment covering 302-317 (MKRRRTEGGNKREKDN) has biased composition (basic and acidic residues). Residues 302-327 (MKRRRTEGGNKREKDNGNFGRTLTET) are disordered. Residues 519 to 730 (PILKTMIKGG…YSLVKFLELD (212 aa)) enclose the Helicase ATP-binding domain. Residue 532–539 (DEMGLGKT) coordinates ATP. The DEGH box motif lies at 681–684 (DEGH). The segment at 914–961 (CSICTTEPMDLDKALFTECGHSFCEKCLFEYIEFQNSKNLGLKCPNCR) adopts an RING-type zinc-finger fold. Residues 995 to 1165 (KITALLKELQ…RRKRRIEEIQ (171 aa)) enclose the Helicase C-terminal domain.

It belongs to the SNF2/RAD54 helicase family. In terms of assembly, homodimer. Interacts with POL30, RAD18, UBC9 and UBC13. Requires Mg(2+) as cofactor. Mn(2+) serves as cofactor. Ca(2+) is required as a cofactor.

It is found in the cytoplasm. The protein resides in the nucleus. Its function is as follows. Probable helicase, member of the UBC2/RAD6 epistasis group. Functions with the DNA repair protein RAD18 in error-free postreplication DNA repair. Involved in the maintenance of wild-type rates of instability of simple repetitive sequences such as poly(GT) repeats. Seems to be involved in maintaining a balance which acts in favor of error-prone non-homologous joining during DNA double-strand breaks repairs. Recruits the UBC13-MMS2 dimer to chromatin for DNA repair. The chain is DNA repair protein RAD5 (RAD5) from Saccharomyces cerevisiae (strain ATCC 204508 / S288c) (Baker's yeast).